The chain runs to 200 residues: Large ribosomal subunit protein uL13 (200 aa).

This sequence belongs to the universal ribosomal protein uL13 family. In terms of assembly, component of the large ribosomal subunit. Mature ribosomes consist of a small (40S) and a large (60S) subunit. The 40S subunit contains about 32 different proteins and 1 molecule of RNA (18S). The 60S subunit contains 45 different proteins and 3 molecules of RNA (25S, 5.8S and 5S).

Its subcellular location is the cytoplasm. Component of the ribosome, a large ribonucleoprotein complex responsible for the synthesis of proteins in the cell. The small ribosomal subunit (SSU) binds messenger RNAs (mRNAs) and translates the encoded message by selecting cognate aminoacyl-transfer RNA (tRNA) molecules. The large subunit (LSU) contains the ribosomal catalytic site termed the peptidyl transferase center (PTC), which catalyzes the formation of peptide bonds, thereby polymerizing the amino acids delivered by tRNAs into a polypeptide chain. The nascent polypeptides leave the ribosome through a tunnel in the LSU and interact with protein factors that function in enzymatic processing, targeting, and the membrane insertion of nascent chains at the exit of the ribosomal tunnel. The chain is Large ribosomal subunit protein uL13 from Candida albicans (strain SC5314 / ATCC MYA-2876) (Yeast).